The following is a 312-amino-acid chain: DNA primase small subunit PriS (312 aa).

Active-site residues include D88, D90, and D215.

The protein belongs to the eukaryotic-type primase small subunit family. In terms of assembly, heterodimer of a small subunit (PriS) and a large subunit (PriL). Mg(2+) serves as cofactor. The cofactor is Mn(2+).

Functionally, catalytic subunit of DNA primase, an RNA polymerase that catalyzes the synthesis of short RNA molecules used as primers for DNA polymerase during DNA replication. The small subunit contains the primase catalytic core and has DNA synthesis activity on its own. Binding to the large subunit stabilizes and modulates the activity, increasing the rate of DNA synthesis while decreasing the length of the DNA fragments, and conferring RNA synthesis capability. The DNA polymerase activity may enable DNA primase to also catalyze primer extension after primer synthesis. May also play a role in DNA repair. This chain is DNA primase small subunit PriS, found in Pyrobaculum islandicum (strain DSM 4184 / JCM 9189 / GEO3).